We begin with the raw amino-acid sequence, 271 residues long: TIP41-like protein (271 aa).

At K106 the chain carries N6-acetyllysine. The interval 173–271 is interaction with PPP2CA; the sequence is RVMPSSFFLL…PVDSQSTPSE (99 aa). 2 positions are modified to phosphoserine: S265 and S270.

It belongs to the TIP41 family. Interacts with PPP2CA. Interacts with PPP2CB, PPP4C and PPP6C. Interacts with IGBP1; the interaction is dependent on PPP2CA. Associates with a protein phosphatase 2A PP2A(C):IGBP1 complex. Interacts with PPP4C and PPP4R2.

The protein localises to the cytoplasm. Its function is as follows. May be a allosteric regulator of serine/threonine-protein phosphatase 2A (PP2A). Inhibits catalytic activity of the PP2A(D) core complex in vitro. The PP2A(C):TIPRL complex does not show phosphatase activity. Acts as a negative regulator of serine/threonine-protein phosphatase 4 probably by inhibiting the formation of the active PPP4C:PPP4R2 complex; the function is proposed to implicate it in DNA damage response by promoting H2AX phosphorylated on Ser-140 (gamma-H2AX). May play a role in the regulation of ATM/ATR signaling pathway controlling DNA replication and repair. This is TIP41-like protein (Tiprl) from Mus musculus (Mouse).